Consider the following 1373-residue polypeptide: Disease resistance protein RRS1 (1373 aa).

The TIR domain maps to Glu5–His146. The NB-ARC domain occupies Ile170 to His421. Gly179–Thr186 is an ATP binding site. LRR repeat units lie at residues Ser498 to Asn522, Asn535 to Pro553, Asn554 to Pro575, His577 to Leu598, Ala621 to Arg646, Pro665 to Pro688, Leu742 to Gly766, Pro768 to Ile793, and Pro831 to Leu854. The Nuclear localization signal signature appears at Arg988–Asp1005. The WRKY DNA-binding region spans Ile1204–Pro1272. The segment at Arg1300–Ala1323 is disordered.

Interacts with PopP2, a R.solanacearum type III effector.

It localises to the nucleus. Its function is as follows. Transcription factor. Interacts specifically with the W box (5'-(T)TGAC[CT]-3'), a frequently occurring elicitor-responsive cis-acting element. Also acts as a disease resistance protein involved in resistance to fungal and bacterial pathogens, including R.solanacearum, P.syringae pv. tomato and C.higginsianum. In presence of RPS4, elicites an EDS1-dependent hypersensitive response. In Arabidopsis thaliana (Mouse-ear cress), this protein is Disease resistance protein RRS1.